The primary structure comprises 220 residues: Putative GED domain-containing protein DNM1P46 (220 aa).

Residues Val18–Met46 are disordered. The segment covering Gln28–Gly38 has biased composition (basic and acidic residues). Positions Met54–Thr149 constitute a GED domain. The interval Asp173–Lys194 is disordered. Basic and acidic residues predominate over residues Ala185–Lys194.

The polypeptide is Putative GED domain-containing protein DNM1P46 (DNM1P46) (Homo sapiens (Human)).